The sequence spans 274 residues: HTH-type transcriptional regulator GadX (274 aa).

The HTH araC/xylS-type domain occupies 145-242 (TRVCTVINNN…GMTPTEYQER (98 aa)). DNA-binding regions (H-T-H motif) lie at residues 162–183 (ARIASELLMSPSLLKKKLREEE) and 209–232 (IKRVAVSCGYHSVSYFIYVFRNYY).

As to quaternary structure, homodimer.

Its function is as follows. Positively regulates the expression of about fifteen genes involved in acid resistance such as gadA, gadB and gadC. Depending on the conditions (growth phase and medium), can repress gadW. This is HTH-type transcriptional regulator GadX (gadX) from Escherichia coli O157:H7.